The chain runs to 292 residues: Ribosomal RNA small subunit methyltransferase A (292 aa).

Positions 28, 30, 55, 76, 101, and 126 each coordinate S-adenosyl-L-methionine.

Belongs to the class I-like SAM-binding methyltransferase superfamily. rRNA adenine N(6)-methyltransferase family. RsmA subfamily.

It is found in the cytoplasm. The enzyme catalyses adenosine(1518)/adenosine(1519) in 16S rRNA + 4 S-adenosyl-L-methionine = N(6)-dimethyladenosine(1518)/N(6)-dimethyladenosine(1519) in 16S rRNA + 4 S-adenosyl-L-homocysteine + 4 H(+). Its function is as follows. Specifically dimethylates two adjacent adenosines (A1518 and A1519) in the loop of a conserved hairpin near the 3'-end of 16S rRNA in the 30S particle. May play a critical role in biogenesis of 30S subunits. In Bacillus mycoides (strain KBAB4) (Bacillus weihenstephanensis), this protein is Ribosomal RNA small subunit methyltransferase A.